The chain runs to 126 residues: Arginine decarboxylase proenzyme (126 aa).

The active-site Schiff-base intermediate with substrate; via pyruvic acid is S74. A Pyruvic acid (Ser); by autocatalysis modification is found at S74. The active-site Proton acceptor; for processing activity is H79. C94 serves as the catalytic Proton donor; for catalytic activity.

The protein belongs to the prokaryotic AdoMetDC family. Type 1 subfamily. In terms of assembly, heterooctamer of four alpha and four beta chains arranged as a tetramer of alpha/beta heterodimers. Requires pyruvate as cofactor. In terms of processing, is synthesized initially as an inactive proenzyme. Formation of the active enzyme involves a self-maturation process in which the active site pyruvoyl group is generated from an internal serine residue via an autocatalytic post-translational modification. Two non-identical subunits are generated from the proenzyme in this reaction, and the pyruvate is formed at the N-terminus of the alpha chain, which is derived from the carboxyl end of the proenzyme. The post-translation cleavage follows an unusual pathway, termed non-hydrolytic serinolysis, in which the side chain hydroxyl group of the serine supplies its oxygen atom to form the C-terminus of the beta chain, while the remainder of the serine residue undergoes an oxidative deamination to produce ammonia and the pyruvoyl group blocking the N-terminus of the alpha chain.

The catalysed reaction is L-arginine + H(+) = agmatine + CO2. Its pathway is amine and polyamine biosynthesis; agmatine biosynthesis; agmatine from L-arginine: step 1/1. In terms of biological role, specifically catalyzes the decarboxylation of L-arginine to agmatine. Has no S-adenosylmethionine decarboxylase (AdoMetDC) activity. In Pyrobaculum islandicum (strain DSM 4184 / JCM 9189 / GEO3), this protein is Arginine decarboxylase proenzyme.